The chain runs to 303 residues: Aspartate carbamoyltransferase catalytic subunit (303 aa).

Carbamoyl phosphate contacts are provided by R51 and T52. Residue K80 coordinates L-aspartate. Residues R101, H129, and Q132 each contribute to the carbamoyl phosphate site. Residues R162 and R221 each contribute to the L-aspartate site. Residues L260 and P261 each coordinate carbamoyl phosphate.

This sequence belongs to the aspartate/ornithine carbamoyltransferase superfamily. ATCase family. In terms of assembly, heterooligomer of catalytic and regulatory chains.

It catalyses the reaction carbamoyl phosphate + L-aspartate = N-carbamoyl-L-aspartate + phosphate + H(+). It functions in the pathway pyrimidine metabolism; UMP biosynthesis via de novo pathway; (S)-dihydroorotate from bicarbonate: step 2/3. Its function is as follows. Catalyzes the condensation of carbamoyl phosphate and aspartate to form carbamoyl aspartate and inorganic phosphate, the committed step in the de novo pyrimidine nucleotide biosynthesis pathway. The protein is Aspartate carbamoyltransferase catalytic subunit of Saccharolobus islandicus (strain Y.N.15.51 / Yellowstone #2) (Sulfolobus islandicus).